The primary structure comprises 1096 residues: Protein spire (1096 aa).

Disordered regions lie at residues methionine 1 to threonine 79 and valine 184 to valine 211. Residues leucine 37–alanine 51 show a composition bias toward polar residues. Basic residues predominate over residues threonine 53 to glycine 65. Low complexity-rich tracts occupy residues alanine 66 to asparagine 77 and glutamine 189 to proline 201. The KIND domain occupies valine 111–leucine 366. Residues lysine 315–asparagine 340 are a coiled coil. 2 WH2 domains span residues proline 436–valine 454 and proline 500–isoleucine 517. Disordered stretches follow at residues aspartate 560–alanine 588, glutamine 614–threonine 656, and glutamine 693–tryptophan 762. The span at histidine 574–alanine 585 shows a compositional bias: basic residues. 2 stretches are compositionally biased toward low complexity: residues alanine 633–alanine 645 and aspartate 714–serine 725. Basic and acidic residues predominate over residues glutamate 737–histidine 754. Residues leucine 780–glutamate 800 are spir-box. Residues proline 874–threonine 894 are compositionally biased toward low complexity. 3 disordered regions span residues proline 874 to aspartate 899, arginine 912 to histidine 958, and arginine 997 to leucine 1021. Over residues serine 921 to glycine 941 the composition is skewed to polar residues.

This sequence belongs to the spire family. In terms of assembly, interacts with bsk, Rho1, Rac1, Cdc42 and wash. Interacts with capu. Phosphorylated by Jnk kinase (bsk).

It localises to the cytoplasm. It is found in the cytoskeleton. The protein localises to the perinuclear region. The protein resides in the cell membrane. Its subcellular location is the cytoplasmic vesicle membrane. Its function is as follows. Acts as an actin nucleation factor, remains associated with the slow-growing pointed end of the new filament. Promotes dissociation of capu from the barbed end of actin filaments. Involved in intracellular vesicle transport along actin fibers, providing a novel link between actin cytoskeleton dynamics and intracellular transport. Required for localization of determinants within the developing oocyte to the posterior pole and to the dorsal anterior corner. Links Rho family signaling and Jnk function to the actin cytoskeleton. This chain is Protein spire, found in Drosophila pseudoobscura pseudoobscura (Fruit fly).